The sequence spans 324 residues: Cytosolic sulfotransferase 13 (324 aa).

3'-phosphoadenylyl sulfate is bound at residue 76–81 (KSGTTW). Histidine 134 functions as the Proton acceptor in the catalytic mechanism. 3'-phosphoadenylyl sulfate contacts are provided by residues arginine 156, serine 164, tyrosine 222, and 288–290 (RKG).

It belongs to the sulfotransferase 1 family.

The protein resides in the cytoplasm. Functionally, sulfotransferase that utilizes 3'-phospho-5'-adenylyl sulfate (PAPS) as sulfonate donor. This Arabidopsis thaliana (Mouse-ear cress) protein is Cytosolic sulfotransferase 13 (SOT13).